Here is a 660-residue protein sequence, read N- to C-terminus: Phosphatidylinositol-3-phosphate phosphatase MTMR7 (660 aa).

Residues 126–504 enclose the Myotubularin phosphatase domain; the sequence is GWVLIDLSEE…FMYKFWSGMY (379 aa). Residues asparagine 250, asparagine 275, and isoleucine 276 each contribute to the a 1,2-diacyl-sn-glycero-3-phospho-(1D-myo-inositol-3-phosphate) site. Cysteine 338 (phosphocysteine intermediate) is an active-site residue. Positions 339, 340, 341, 342, 343, 344, and 384 each coordinate a 1,2-diacyl-sn-glycero-3-phospho-(1D-myo-inositol-3-phosphate). Residues 514-558 adopt a coiled-coil conformation; that stretch reads RQSVTDYLMAVKEETQQLEEELEALEERLEKIQKVQLNCTKVKSK. A disordered region spans residues 554-660; the sequence is KVKSKQSEPS…DSDEAVFLTA (107 aa). A compositionally biased stretch (polar residues) spans 566–596; sequence SGFSTSDNSIANTPQDYSGNMKSFPSRSPSQ. Residue threonine 578 is modified to Phosphothreonine. Over residues 641-653 the composition is skewed to basic and acidic residues; sequence APSEDSGKDRDSD.

The protein belongs to the protein-tyrosine phosphatase family. Non-receptor class myotubularin subfamily. Heterodimer (via C-terminus) with MTMR9 (via coiled coil domain); the interaction enhances MTMR7 catalytic activity. Does not homodimerize. Interacts with RAB1B (in GDP-bound form).

The protein localises to the cytoplasm. The protein resides in the endomembrane system. It catalyses the reaction a 1,2-diacyl-sn-glycero-3-phospho-(1D-myo-inositol-3-phosphate) + H2O = a 1,2-diacyl-sn-glycero-3-phospho-(1D-myo-inositol) + phosphate. It carries out the reaction 1D-myo-inositol 1,3-bisphosphate + H2O = 1D-myo-inositol 1-phosphate + phosphate. Its activity is regulated as follows. Interaction with MTMR9 increases phosphatase activity. In terms of biological role, lipid phosphatase that specifically dephosphorylates the D-3 position of phosphatidylinositol 3-phosphate (PtdIns(3)P) and inositol 1,3-bisphosphate (Ins(1,3)P2). The polypeptide is Phosphatidylinositol-3-phosphate phosphatase MTMR7 (Pongo abelii (Sumatran orangutan)).